A 232-amino-acid chain; its full sequence is Ribonuclease 3 (232 aa).

The RNase III domain occupies 5-134; it reads QTVLKNHFAI…FLGALLLDKD (130 aa). Glu-47 lines the Mg(2+) pocket. Asp-51 is a catalytic residue. Mg(2+) contacts are provided by Asp-120 and Glu-123. Glu-123 is a catalytic residue. In terms of domain architecture, DRBM spans 160–229; sequence DYKTHLQELL…AKNAVEKGLD (70 aa).

This sequence belongs to the ribonuclease III family. In terms of assembly, homodimer. Mg(2+) serves as cofactor.

The protein localises to the cytoplasm. It catalyses the reaction Endonucleolytic cleavage to 5'-phosphomonoester.. Digests double-stranded RNA. Involved in the processing of primary rRNA transcript to yield the immediate precursors to the large and small rRNAs (23S and 16S). Processes some mRNAs, and tRNAs when they are encoded in the rRNA operon. Processes pre-crRNA and tracrRNA of type II CRISPR loci if present in the organism. The sequence is that of Ribonuclease 3 from Streptococcus pneumoniae (strain CGSP14).